The primary structure comprises 393 residues: MALKVAIAAGSAAKAIFKPALLCRPWEVLAAHEAPRRSISSQQTIPPSAKYGGRHTVTMIPGDGIGPELMLHVKSVFRHACVPVDFEEVHVSSNADEEDIRNAIMAIRRNRVALKGNIETNHDLPPSHKSRNNILRTSLDLYANVIHCKSLPGVVTRHKDIDILIVRENTEGEYSSLEHESVAGVVESLKIITKAKSLRIAEYAFKLAQESGRKKVTAVHKANIMKLGDGLFLQCCREVAARYPQITFDSMIVDNTTMQLVSRPQQFDVMVMPNLYGNIVNNVCAGLVGGPGLVAGANYGHVYAVFETATRNTGKSIANKNIANPTATLLASCMMLDHLKLHSYATSIRKAVLASMDNENMHTPDIGGQGTTSQAIQDIIRHIRIINGRAVEA.

Residues 1–39 (MALKVAIAAGSAAKAIFKPALLCRPWEVLAAHEAPRRSI) constitute a mitochondrion transit peptide. Residue T120 participates in citrate binding. Phosphoserine is present on S130. N133 contacts citrate. Residues R136 and R167 each contribute to the substrate site. K206 is modified (N6-acetyllysine). The residue at position 226 (K226) is an N6-succinyllysine. D254 provides a ligand contact to substrate. D254 is a Mn(2+) binding site. The ADP site is built by N312, T313, and N324.

The protein belongs to the isocitrate and isopropylmalate dehydrogenases family. As to quaternary structure, heterooligomer of subunits alpha (IDH3A), beta (IDH3B), and gamma (IDH3G) in the apparent ratio of 2:1:1. The heterodimer containing one IDH3A and one IDH3B subunit and the heterodimer containing one IDH3A and one IDH3G subunit assemble into a heterotetramer (which contains two subunits of IDH3A, one of IDH3B and one of IDH3G) and further into the heterooctamer. Requires Mg(2+) as cofactor. It depends on Mn(2+) as a cofactor.

The protein localises to the mitochondrion. Its activity is regulated as follows. The heterotetramer and the heterodimer composed of IDH3A and IDH3G subunits can be allosterically activated by citrate (CIT) or/and ADP, and the two activators can act independently or synergistically. The heterodimer composed of IDH3A and IDH3B subunits cannot be allosterically regulated and the allosteric regulation of the heterotetramer is through the IDH3G subunit and not the IDH3B subunit. The IDH3G subunit contains the allosteric site which consists of a CIT-binding site and an ADP-binding site, and the binding of CIT and ADP causes conformational changes at the allosteric site which are transmitted to the active site in the catalytic subunit (IDH3A) through a cascade of conformational changes at the heterodimer interface, leading to stabilization of the isocitrate-binding at the active site and thus activation of the enzyme. ATP can activate the heterotetramer and the heterodimer composed of IDH3A and IDH3G subunits at low concentrations but inhibits their activities at high concentrations, whereas ATP exhibits only inhibitory effect on the heterodimer composed of IDH3A and IDH3B subunits. Functionally, regulatory subunit which plays a role in the allosteric regulation of the enzyme catalyzing the decarboxylation of isocitrate (ICT) into alpha-ketoglutarate. The heterodimer composed of the alpha (IDH3A) and beta (IDH3B) subunits and the heterodimer composed of the alpha (IDH3A) and gamma (IDH3G) subunits, have considerable basal activity but the full activity of the heterotetramer (containing two subunits of IDH3A, one of IDH3B and one of IDH3G) requires the assembly and cooperative function of both heterodimers. The sequence is that of Isocitrate dehydrogenase [NAD] subunit gamma 1, mitochondrial (Idh3g) from Rattus norvegicus (Rat).